The primary structure comprises 394 residues: Elongation factor Tu (394 aa).

Positions Lys-10 to Glu-204 constitute a tr-type G domain. A G1 region spans residues Gly-19–Thr-26. Residue Gly-19–Thr-26 participates in GTP binding. Thr-26 contacts Mg(2+). The tract at residues Gly-60–Asn-64 is G2. The segment at Asp-81–Gly-84 is G3. GTP contacts are provided by residues Asp-81–His-85 and Asn-136–Asp-139. Residues Asn-136–Asp-139 are G4. A G5 region spans residues Ser-174–Leu-176.

The protein belongs to the TRAFAC class translation factor GTPase superfamily. Classic translation factor GTPase family. EF-Tu/EF-1A subfamily. In terms of assembly, monomer.

It is found in the cytoplasm. It catalyses the reaction GTP + H2O = GDP + phosphate + H(+). GTP hydrolase that promotes the GTP-dependent binding of aminoacyl-tRNA to the A-site of ribosomes during protein biosynthesis. The chain is Elongation factor Tu from Ureaplasma parvum serovar 3 (strain ATCC 27815 / 27 / NCTC 11736).